A 292-amino-acid chain; its full sequence is Cytidine deaminase (292 aa).

CMP/dCMP-type deaminase domains follow at residues 47–167 (TPLK…FGPK) and 186–292 (DHQD…YYSL). Substrate is bound at residue 88–90 (NQE). A Zn(2+)-binding site is contributed by H101. The Proton donor role is filled by E103. C128 and C131 together coordinate Zn(2+).

Belongs to the cytidine and deoxycytidylate deaminase family. As to quaternary structure, homodimer. Zn(2+) is required as a cofactor.

It catalyses the reaction cytidine + H2O + H(+) = uridine + NH4(+). The catalysed reaction is 2'-deoxycytidine + H2O + H(+) = 2'-deoxyuridine + NH4(+). Functionally, this enzyme scavenges exogenous and endogenous cytidine and 2'-deoxycytidine for UMP synthesis. The protein is Cytidine deaminase of Haemophilus influenzae (strain PittEE).